Here is a 293-residue protein sequence, read N- to C-terminus: 4-diphosphocytidyl-2-C-methyl-D-erythritol kinase (293 aa).

Residue Lys10 is part of the active site. ATP is bound at residue 94–104 (PVSAGLAGGSS). The active site involves Asp136.

Belongs to the GHMP kinase family. IspE subfamily.

The enzyme catalyses 4-CDP-2-C-methyl-D-erythritol + ATP = 4-CDP-2-C-methyl-D-erythritol 2-phosphate + ADP + H(+). The protein operates within isoprenoid biosynthesis; isopentenyl diphosphate biosynthesis via DXP pathway; isopentenyl diphosphate from 1-deoxy-D-xylulose 5-phosphate: step 3/6. In terms of biological role, catalyzes the phosphorylation of the position 2 hydroxy group of 4-diphosphocytidyl-2C-methyl-D-erythritol. In Listeria monocytogenes serotype 4b (strain CLIP80459), this protein is 4-diphosphocytidyl-2-C-methyl-D-erythritol kinase.